The chain runs to 173 residues: Myosin light chain 5 (173 aa).

A disordered region spans residues 1-22 (MASRKTKKKEGGGLRAQRASSN). EF-hand domains are found at residues 30 to 65 (TQIQ…LGKT), 100 to 135 (DAEE…QADK), and 136 to 171 (MTAE…GEEK). Ca(2+) is bound by residues aspartate 43, asparagine 45, aspartate 47, and aspartate 54.

In terms of assembly, myosin is a hexamer of 2 heavy chains and 4 light chains. Jaw-closing muscles.

The sequence is that of Myosin light chain 5 (MYL5) from Felis catus (Cat).